Here is a 204-residue protein sequence, read N- to C-terminus: Crossover junction endodeoxyribonuclease RuvC (204 aa).

Residues aspartate 7, glutamate 68, and aspartate 141 contribute to the active site. Mg(2+) is bound by residues aspartate 7, glutamate 68, and aspartate 141. The tract at residues 164-204 is disordered; sequence QAVAAHRTSGASRTPGAAGTPGPSRTPGAPGTSRTLKGRTA.

It belongs to the RuvC family. Homodimer which binds Holliday junction (HJ) DNA. The HJ becomes 2-fold symmetrical on binding to RuvC with unstacked arms; it has a different conformation from HJ DNA in complex with RuvA. In the full resolvosome a probable DNA-RuvA(4)-RuvB(12)-RuvC(2) complex forms which resolves the HJ. Mg(2+) is required as a cofactor.

The protein localises to the cytoplasm. The catalysed reaction is Endonucleolytic cleavage at a junction such as a reciprocal single-stranded crossover between two homologous DNA duplexes (Holliday junction).. Functionally, the RuvA-RuvB-RuvC complex processes Holliday junction (HJ) DNA during genetic recombination and DNA repair. Endonuclease that resolves HJ intermediates. Cleaves cruciform DNA by making single-stranded nicks across the HJ at symmetrical positions within the homologous arms, yielding a 5'-phosphate and a 3'-hydroxyl group; requires a central core of homology in the junction. The consensus cleavage sequence is 5'-(A/T)TT(C/G)-3'. Cleavage occurs on the 3'-side of the TT dinucleotide at the point of strand exchange. HJ branch migration catalyzed by RuvA-RuvB allows RuvC to scan DNA until it finds its consensus sequence, where it cleaves and resolves the cruciform DNA. The protein is Crossover junction endodeoxyribonuclease RuvC of Streptomyces griseus subsp. griseus (strain JCM 4626 / CBS 651.72 / NBRC 13350 / KCC S-0626 / ISP 5235).